The primary structure comprises 1642 residues: Mitochondrial 3' processome subunit 2 (1642 aa).

Residues 1-27 (MGLPFLCHTRVCLFSNKIPFVLCGSRF) constitute a mitochondrion transit peptide. 2 disordered regions span residues 43-69 (ETLN…PQKK) and 745-772 (KGEK…LSGP). Residues 49-65 (ELSSPSTSKEPSVGSDS) show a composition bias toward polar residues.

In terms of assembly, component of the mitochondrial 3' processome (MPsome) complex composed at least of terminal uridylyltransferase KRET1/TUT1, 3'-5' exonuclease DSS1, MPSS1, MPSS2 and MPSS3. Within the complex, interacts with DSS1.

It localises to the mitochondrion. As part of the mitochondrial 3' processome (MPsome), involved in the maturation of guided RNA (gRNA) precursors. This chain is Mitochondrial 3' processome subunit 2, found in Trypanosoma brucei brucei.